The following is a 397-amino-acid chain: Alpha-2B adrenergic receptor (397 aa).

Residues Ala1–Leu25 traverse the membrane as a helical segment. Over Thr26 to Leu36 the chain is Cytoplasmic. Residues Phe37–Leu62 traverse the membrane as a helical segment. Residues Gly63 to Cys72 are Extracellular-facing. Cys72 and Cys151 are disulfide-bonded. Residues Lys73–Leu95 traverse the membrane as a helical segment. The Cytoplasmic segment spans residues Asp96–Lys117. Residues Cys118–Asp140 form a helical membrane-spanning segment. The Extracellular segment spans residues Gln141 to Glu156. The chain crosses the membrane as a helical span at residues Thr157–Leu180. The Cytoplasmic segment spans residues Arg181 to Val361. Disordered stretches follow at residues Gly193–Pro212 and Ala230–Pro319. Residues Ser280–Glu300 are compositionally biased toward acidic residues. Low complexity predominate over residues Pro301 to Pro319. A helical transmembrane segment spans residues Leu362–Ile385. Topologically, residues Cys386 to His394 are extracellular. A helical membrane pass occupies residues Asp395–Phe397.

The protein belongs to the G-protein coupled receptor 1 family. Adrenergic receptor subfamily. ADRA2B sub-subfamily. In terms of assembly, interacts with RAB26. Interacts with PPP1R9B.

It localises to the cell membrane. In terms of biological role, alpha-2 adrenergic receptors mediate the catecholamine-induced inhibition of adenylate cyclase through the action of G proteins. The sequence is that of Alpha-2B adrenergic receptor (ADRA2B) from Talpa europaea (European mole).